A 694-amino-acid polypeptide reads, in one-letter code: TBC1 domain family member 14 (694 aa).

Ser-92 is subject to Phosphoserine. A compositionally biased stretch (basic and acidic residues) spans 272-289; it reads TAQKDSKKTQKEYEDKAG. Residues 272 to 305 form a disordered region; sequence TAQKDSKKTQKEYEDKAGRPSRPPSPKQNVRKNL. Position 296 is a phosphoserine (Ser-296). The Rab-GAP TBC domain occupies 402–612; that stretch reads GIPPSVRGKV…RIWDVFCRDG (211 aa).

In terms of assembly, interacts with ULK1. May interact with RAB11A and RAB11B, but does not exhibit any GTPase-activating activity toward these proteins. Interacts with TRAPPC8.

The protein resides in the golgi apparatus. It is found in the cis-Golgi network. Its subcellular location is the trans-Golgi network. Plays a role in the regulation of starvation-induced autophagosome formation. Together with the TRAPPIII complex, regulates a constitutive trafficking step from peripheral recycling endosomes to the early Golgi, maintaining the cycling pool of ATG9 required for initiation of autophagy. The sequence is that of TBC1 domain family member 14 (Tbc1d14) from Mus musculus (Mouse).